A 604-amino-acid chain; its full sequence is Elongation factor 4 (604 aa).

Positions 7–189 (SRLRNFCIIA…AVVDRIPPPA (183 aa)) constitute a tr-type G domain. Residues 19–24 (DHGKST) and 136–139 (NKID) each bind GTP.

This sequence belongs to the TRAFAC class translation factor GTPase superfamily. Classic translation factor GTPase family. LepA subfamily.

It localises to the cell inner membrane. The enzyme catalyses GTP + H2O = GDP + phosphate + H(+). In terms of biological role, required for accurate and efficient protein synthesis under certain stress conditions. May act as a fidelity factor of the translation reaction, by catalyzing a one-codon backward translocation of tRNAs on improperly translocated ribosomes. Back-translocation proceeds from a post-translocation (POST) complex to a pre-translocation (PRE) complex, thus giving elongation factor G a second chance to translocate the tRNAs correctly. Binds to ribosomes in a GTP-dependent manner. This chain is Elongation factor 4, found in Prochlorococcus marinus (strain MIT 9313).